Here is a 110-residue protein sequence, read N- to C-terminus: Small ribosomal subunit protein mS33 (110 aa).

A compositionally biased stretch (basic residues) spans 84-95 (KRRGKGAPKKMK). Residues 84 to 110 (KRRGKGAPKKMKKDAAATAKGKGKKKK) form a disordered region.

This sequence belongs to the mitochondrion-specific ribosomal protein mS33 family. In terms of assembly, component of the mitochondrial small ribosomal subunit (mt-SSU). Mature yeast 74S mitochondrial ribosomes consist of a small (37S) and a large (54S) subunit. The 37S small subunit contains a 15S ribosomal RNA (15S mt-rRNA) and 34 different proteins. The 54S large subunit contains a 21S rRNA (21S mt-rRNA) and 46 different proteins.

The protein localises to the mitochondrion. Functionally, component of the mitochondrial ribosome (mitoribosome), a dedicated translation machinery responsible for the synthesis of mitochondrial genome-encoded proteins, including at least some of the essential transmembrane subunits of the mitochondrial respiratory chain. The mitoribosomes are attached to the mitochondrial inner membrane and translation products are cotranslationally integrated into the membrane. The polypeptide is Small ribosomal subunit protein mS33 (RSM27) (Saccharomyces cerevisiae (strain ATCC 204508 / S288c) (Baker's yeast)).